The sequence spans 1009 residues: Type VII secretion system accessory factor EsaA (1009 aa).

6 helical membrane-spanning segments follow: residues 7 to 27 (IYALIVTLIIIIAIVSMIFFV), 822 to 842 (ISPTLFVLLMYLLSMITAYIF), 869 to 889 (VITSGVIGTTGLVEGLIVGLI), 903 to 923 (KFILMVILTMMVFVLINTYLL), 928 to 948 (SIGMFLMIAALGLYFVAMNNL), and 979 to 999 (IGLALVILTVLVIIGFVLNMF).

Belongs to the EsaA family. As to quaternary structure, homodimer. Interacts with EssB.

It localises to the cell membrane. Functionally, component of the type VII secretion system (Ess). Provides together with EssB and other components such as EssC and EssE a secretion platform across the cytoplasmic membrane in the host. This is Type VII secretion system accessory factor EsaA from Staphylococcus aureus (strain Mu50 / ATCC 700699).